The sequence spans 315 residues: Aspartate carbamoyltransferase catalytic subunit (315 aa).

The carbamoyl phosphate site is built by arginine 65 and threonine 66. Lysine 93 provides a ligand contact to L-aspartate. Carbamoyl phosphate contacts are provided by arginine 115, histidine 145, and glutamine 148. The L-aspartate site is built by arginine 179 and arginine 234. Residues glycine 275 and proline 276 each coordinate carbamoyl phosphate.

It belongs to the aspartate/ornithine carbamoyltransferase superfamily. ATCase family. As to quaternary structure, heterododecamer (2C3:3R2) of six catalytic PyrB chains organized as two trimers (C3), and six regulatory PyrI chains organized as three dimers (R2).

It carries out the reaction carbamoyl phosphate + L-aspartate = N-carbamoyl-L-aspartate + phosphate + H(+). It participates in pyrimidine metabolism; UMP biosynthesis via de novo pathway; (S)-dihydroorotate from bicarbonate: step 2/3. Functionally, catalyzes the condensation of carbamoyl phosphate and aspartate to form carbamoyl aspartate and inorganic phosphate, the committed step in the de novo pyrimidine nucleotide biosynthesis pathway. This Xanthomonas campestris pv. campestris (strain 8004) protein is Aspartate carbamoyltransferase catalytic subunit.